The primary structure comprises 819 residues: Leucine--tRNA ligase (819 aa).

Positions 41–51 (PYPSGTLHVGH) match the 'HIGH' region motif. The 'KMSKS' region signature appears at 578-582 (KMSKS). Position 581 (Lys581) interacts with ATP.

This sequence belongs to the class-I aminoacyl-tRNA synthetase family.

Its subcellular location is the cytoplasm. The catalysed reaction is tRNA(Leu) + L-leucine + ATP = L-leucyl-tRNA(Leu) + AMP + diphosphate. The protein is Leucine--tRNA ligase of Fervidobacterium nodosum (strain ATCC 35602 / DSM 5306 / Rt17-B1).